The chain runs to 437 residues: tRNA-2-methylthio-N(6)-dimethylallyladenosine synthase (437 aa).

Residues 1–115 form the MTTase N-terminal domain; that stretch reads MKVYIETMGC…ISQVIHKEKA (115 aa). [4Fe-4S] cluster contacts are provided by Cys-10, Cys-46, Cys-78, Cys-148, Cys-152, and Cys-155. The 234-residue stretch at 134–367 folds into the Radical SAM core domain; the sequence is KKAQIRSLLN…QNRHKEILEE (234 aa). In terms of domain architecture, TRAM spans 370 to 436; the sequence is KLEVGKTHVV…KGRLIAAIKG (67 aa).

It belongs to the methylthiotransferase family. MiaB subfamily. In terms of assembly, monomer. It depends on [4Fe-4S] cluster as a cofactor.

Its subcellular location is the cytoplasm. It carries out the reaction N(6)-dimethylallyladenosine(37) in tRNA + (sulfur carrier)-SH + AH2 + 2 S-adenosyl-L-methionine = 2-methylsulfanyl-N(6)-dimethylallyladenosine(37) in tRNA + (sulfur carrier)-H + 5'-deoxyadenosine + L-methionine + A + S-adenosyl-L-homocysteine + 2 H(+). Its function is as follows. Catalyzes the methylthiolation of N6-(dimethylallyl)adenosine (i(6)A), leading to the formation of 2-methylthio-N6-(dimethylallyl)adenosine (ms(2)i(6)A) at position 37 in tRNAs that read codons beginning with uridine. The polypeptide is tRNA-2-methylthio-N(6)-dimethylallyladenosine synthase (Helicobacter pylori (strain HPAG1)).